The sequence spans 1207 residues: DNA-directed RNA polymerase subunit beta' (1207 aa).

4 residues coordinate Zn(2+): Cys-60, Cys-62, Cys-75, and Cys-78. The Mg(2+) site is built by Asp-450, Asp-452, and Asp-454. Zn(2+) contacts are provided by Cys-819, Cys-893, Cys-900, and Cys-903.

It belongs to the RNA polymerase beta' chain family. As to quaternary structure, the RNAP catalytic core consists of 2 alpha, 1 beta, 1 beta' and 1 omega subunit. When a sigma factor is associated with the core the holoenzyme is formed, which can initiate transcription. Requires Mg(2+) as cofactor. The cofactor is Zn(2+).

The enzyme catalyses RNA(n) + a ribonucleoside 5'-triphosphate = RNA(n+1) + diphosphate. Functionally, DNA-dependent RNA polymerase catalyzes the transcription of DNA into RNA using the four ribonucleoside triphosphates as substrates. This Streptococcus pyogenes serotype M3 (strain ATCC BAA-595 / MGAS315) protein is DNA-directed RNA polymerase subunit beta'.